Reading from the N-terminus, the 580-residue chain is Protein O-linked-mannose beta-1,4-N-acetylglucosaminyltransferase 2 (580 aa).

Over 1 to 4 the chain is Cytoplasmic; sequence MHLS. Residues 5-25 traverse the membrane as a helical; Signal-anchor for type II membrane protein segment; it reads AVFNALLVSVLAAVLWKHVRL. Over 26-580 the chain is Lumenal; that stretch reads REHAATLEEE…PFADVLVCST (555 aa). N-linked (GlcNAc...) asparagine glycosylation is found at asparagine 99 and asparagine 276. Residues 488–580 enclose the Fibronectin type-III domain; sequence ARCQASVQGA…PFADVLVCST (93 aa).

The protein belongs to the glycosyltransferase 61 family. As to expression, mainly expressed in the central nervous system.

Its subcellular location is the endoplasmic reticulum membrane. It carries out the reaction 3-O-(alpha-D-mannosyl)-L-threonyl-[protein] + UDP-N-acetyl-alpha-D-glucosamine = 3-O-(N-acetyl-beta-D-glucosaminyl-(1-&gt;4)-alpha-D-mannosyl)-L-threonyl-[protein] + UDP + H(+). It participates in protein modification; protein glycosylation. O-linked mannose beta-1,4-N-acetylglucosaminyltransferase that transfers UDP-N-acetyl-D-glucosamine to the 4-position of the mannose to generate N-acetyl-D-glucosamine-beta-1,4-O-D-mannosylprotein. Involved in the biosynthesis of the phosphorylated O-mannosyl trisaccharide (N-acetylgalactosamine-beta-3-N-acetylglucosamine-beta-4-(phosphate-6-)mannose), a carbohydrate structure present in alpha-dystroglycan (DAG1), which is required for binding laminin G-like domain-containing extracellular proteins with high affinity. This is Protein O-linked-mannose beta-1,4-N-acetylglucosaminyltransferase 2 (Pomgnt2) from Mus musculus (Mouse).